The following is a 148-amino-acid chain: Basic leucine zipper 4 (148 aa).

Residues 48–97 (DDKKRRRTISNRESAKRSRMKKKKRFEELTEEVNRLNIRNQELKNRLANV) enclose the bZIP domain. The tract at residues 50–70 (KKRRRTISNRESAKRSRMKKK) is disordered. A basic motif region spans residues 50 to 72 (KKRRRTISNRESAKRSRMKKKKR). Positions 76–90 (LTEEVNRLNIRNQEL) are leucine-zipper.

The protein resides in the nucleus. Probable transcription factor involved in somatic embryogenesis. Acts as a positive regulator of BHLH109. The protein is Basic leucine zipper 4 of Arabidopsis thaliana (Mouse-ear cress).